The chain runs to 277 residues: Phosphatidylglycerol--prolipoprotein diacylglyceryl transferase (277 aa).

Transmembrane regions (helical) follow at residues 18–38 (IAIY…YFMA), 54–74 (DLLV…YVIF), 91–111 (EGGI…IVFA), and 115–135 (GLSF…GQAI). Arginine 137 contacts a 1,2-diacyl-sn-glycero-3-phospho-(1'-sn-glycerol). 3 helical membrane passes run 177-197 (QPTF…LLLL), 205-225 (GELF…IEGM), and 236-256 (LRTA…LWVY).

The protein belongs to the Lgt family.

It localises to the cell membrane. The catalysed reaction is L-cysteinyl-[prolipoprotein] + a 1,2-diacyl-sn-glycero-3-phospho-(1'-sn-glycerol) = an S-1,2-diacyl-sn-glyceryl-L-cysteinyl-[prolipoprotein] + sn-glycerol 1-phosphate + H(+). The protein operates within protein modification; lipoprotein biosynthesis (diacylglyceryl transfer). In terms of biological role, catalyzes the transfer of the diacylglyceryl group from phosphatidylglycerol to the sulfhydryl group of the N-terminal cysteine of a prolipoprotein, the first step in the formation of mature lipoproteins. This is Phosphatidylglycerol--prolipoprotein diacylglyceryl transferase from Shouchella clausii (strain KSM-K16) (Alkalihalobacillus clausii).